The chain runs to 99 residues: Integration host factor subunit alpha (99 aa).

The tract at residues 49–75 (FGNFDLRDKNQRPGRNPKTGEDIPITA) is disordered.

This sequence belongs to the bacterial histone-like protein family. As to quaternary structure, heterodimer of an alpha and a beta chain.

This protein is one of the two subunits of integration host factor, a specific DNA-binding protein that functions in genetic recombination as well as in transcriptional and translational control. The polypeptide is Integration host factor subunit alpha (Salmonella agona (strain SL483)).